The following is a 310-amino-acid chain: Small ribosomal subunit protein uS2 (310 aa).

Disordered regions lie at residues 213 to 240 (EEQA…GGAA) and 271 to 310 (WDSV…TDWA). Positions 216–227 (AALARQQEEANA) are enriched in low complexity. Residues 297-310 (VTMQEQAKPSTDWA) show a composition bias toward polar residues.

The protein belongs to the universal ribosomal protein uS2 family. Component of the small ribosomal subunit. Mature ribosomes consist of a small (40S) and a large (60S) subunit. The 40S subunit contains about 33 different proteins and 1 molecule of RNA (18S). The 60S subunit contains about 49 different proteins and 3 molecules of RNA (28S, 5.8S and 5S). Interacts with ribosomal protein S21.

It localises to the cytoplasm. Its function is as follows. Required for the assembly and/or stability of the 40S ribosomal subunit. Required for the processing of the 20S rRNA-precursor to mature 18S rRNA in a late step of the maturation of 40S ribosomal subunits. This chain is Small ribosomal subunit protein uS2, found in Nematostella vectensis (Starlet sea anemone).